Here is a 628-residue protein sequence, read N- to C-terminus: tRNA uridine 5-carboxymethylaminomethyl modification enzyme MnmG (628 aa).

Residue 13 to 18 participates in FAD binding; it reads GAGHAG. 281–295 contributes to the NAD(+) binding site; that stretch reads GARYCPSIEDKIKKF.

The protein belongs to the MnmG family. As to quaternary structure, homodimer. Heterotetramer of two MnmE and two MnmG subunits. It depends on FAD as a cofactor.

The protein resides in the cytoplasm. NAD-binding protein involved in the addition of a carboxymethylaminomethyl (cmnm) group at the wobble position (U34) of certain tRNAs, forming tRNA-cmnm(5)s(2)U34. The protein is tRNA uridine 5-carboxymethylaminomethyl modification enzyme MnmG of Treponema denticola (strain ATCC 35405 / DSM 14222 / CIP 103919 / JCM 8153 / KCTC 15104).